We begin with the raw amino-acid sequence, 457 residues long: Multidrug resistance protein MdtK (457 aa).

The next 12 helical transmembrane spans lie at 11-31 (LLAL…MGFV), 53-73 (IWLP…PVIA), 93-113 (WLAG…GYII), 127-147 (AVGY…FQVA), 160-180 (GMVM…IFIY), 188-208 (LGGI…FIAM), 243-263 (LPIA…ALLV), 276-296 (IALN…AAVT), 314-334 (AART…IFTV), 350-370 (VVAL…SDSI), 387-407 (IFFI…YILA), and 418-438 (PAGF…LMML).

This sequence belongs to the multi antimicrobial extrusion (MATE) (TC 2.A.66.1) family. MdtK subfamily.

The protein resides in the cell inner membrane. In terms of biological role, multidrug efflux pump that functions probably as a Na(+)/drug antiporter. This is Multidrug resistance protein MdtK from Salmonella enteritidis PT4 (strain P125109).